Reading from the N-terminus, the 155-residue chain is MPKFIEGKLDAKGLRFGIIVGRFNSFIGERLLEGALDALIRHGADDKNIEVARVPGAFEIPLATKKMAATGKYDAIICLGAVIRGATPHFDYVAAEVSKGVAHVSLDSGVPVAFGVLTTDTIEQAVERAGTKAGNKGFDSAMTAIETANLFKGIK.

5-amino-6-(D-ribitylamino)uracil is bound by residues Phe23, 57–59, and 81–83; these read AFE and AVI. 86–87 is a binding site for (2S)-2-hydroxy-3-oxobutyl phosphate; it reads AT. The Proton donor role is filled by His89. Position 114 (Phe114) interacts with 5-amino-6-(D-ribitylamino)uracil. Arg128 lines the (2S)-2-hydroxy-3-oxobutyl phosphate pocket.

The protein belongs to the DMRL synthase family.

It catalyses the reaction (2S)-2-hydroxy-3-oxobutyl phosphate + 5-amino-6-(D-ribitylamino)uracil = 6,7-dimethyl-8-(1-D-ribityl)lumazine + phosphate + 2 H2O + H(+). It participates in cofactor biosynthesis; riboflavin biosynthesis; riboflavin from 2-hydroxy-3-oxobutyl phosphate and 5-amino-6-(D-ribitylamino)uracil: step 1/2. In terms of biological role, catalyzes the formation of 6,7-dimethyl-8-ribityllumazine by condensation of 5-amino-6-(D-ribitylamino)uracil with 3,4-dihydroxy-2-butanone 4-phosphate. This is the penultimate step in the biosynthesis of riboflavin. This chain is 6,7-dimethyl-8-ribityllumazine synthase, found in Geotalea daltonii (strain DSM 22248 / JCM 15807 / FRC-32) (Geobacter daltonii).